The chain runs to 491 residues: Cobyric acid synthase (491 aa).

Residues 253–429 form the GATase cobBQ-type domain; sequence AHRVAVVRLP…WHGSLEGDAL (177 aa). The active-site Nucleophile is cysteine 334. The active site involves histidine 421.

It belongs to the CobB/CobQ family. CobQ subfamily.

The protein operates within cofactor biosynthesis; adenosylcobalamin biosynthesis. Functionally, catalyzes amidations at positions B, D, E, and G on adenosylcobyrinic A,C-diamide. NH(2) groups are provided by glutamine, and one molecule of ATP is hydrogenolyzed for each amidation. The protein is Cobyric acid synthase of Mycobacterium marinum (strain ATCC BAA-535 / M).